The sequence spans 517 residues: Maturase K (517 aa).

Belongs to the intron maturase 2 family. MatK subfamily.

The protein localises to the plastid. The protein resides in the chloroplast. Functionally, usually encoded in the trnK tRNA gene intron. Probably assists in splicing its own and other chloroplast group II introns. This is Maturase K from Paris tetraphylla.